Consider the following 596-residue polypeptide: Chaperone protein DnaK (596 aa).

Phosphothreonine; by autocatalysis is present on Thr180.

This sequence belongs to the heat shock protein 70 family.

Functionally, acts as a chaperone. In Thermosipho melanesiensis (strain DSM 12029 / CIP 104789 / BI429), this protein is Chaperone protein DnaK.